An 800-amino-acid chain; its full sequence is Fibroblast growth factor receptor 4 (800 aa).

The first 16 residues, 1 to 16 (MWLLLALLSIFQETPA), serve as a signal peptide directing secretion. Ig-like C2-type domains are found at residues 17 to 115 (FSLE…LIMD), 148 to 236 (PQRM…YLLD), and 245 to 345 (PILQ…AWLT). Over 17 to 367 (FSLEASEEME…TATSEARYTD (351 aa)) the chain is Extracellular. The cysteines at positions 54 and 98 are disulfide-linked. Residue Asn-109 is glycosylated (N-linked (GlcNAc...) asparagine). Cys-168 and Cys-220 are joined by a disulfide. 3 N-linked (GlcNAc...) asparagine glycosylation sites follow: Asn-254, Asn-286, and Asn-307. A disulfide bridge links Cys-267 with Cys-329. A helical membrane pass occupies residues 368 to 388 (IILYVSGSLALVLLLLLAGVY). Residues 389-800 (HRQAIHGHHS…PFPFPEAQTT (412 aa)) lie on the Cytoplasmic side of the membrane. The region spanning 465–753 (LVLGKPLGEG…VLLAVSEEYL (289 aa)) is the Protein kinase domain. ATP contacts are provided by residues 471-479 (LGEGCFGQV) and Lys-501. At Ser-571 the chain carries Phosphoserine. Catalysis depends on Asp-610, which acts as the Proton acceptor. Phosphotyrosine; by autocatalysis is present on residues Tyr-640, Tyr-641, and Tyr-752. The tract at residues 768–800 (DASSTCSSSDSVFSHDPLPLEPSPFPFPEAQTT) is disordered. Residues 770-781 (SSTCSSSDSVFS) are compositionally biased toward low complexity.

It belongs to the protein kinase superfamily. Tyr protein kinase family. Fibroblast growth factor receptor subfamily. In terms of assembly, monomer. Homodimer after ligand binding. Interacts with FGF1, FGF2, FGF4, FGF6, FGF8, FGF9, FGF16, FGF17, FGF18, FGF19, FGF21 and FGF23 (in vitro). Binding affinity for FGF family members is enhanced by interactions between FGFs and heparan sulfate proteoglycans. Interacts with KLB; this strongly increases the affinity for FGF19 and FGF23. Affinity for FGF19 is strongly increased by KLB and sulfated glycosaminoglycans. KLB and KL both interact with the core-glycosylated FGFR4 in the endoplasmic reticulum and promote its degradation, so that only FGFR4 with fully mature N-glycans is expressed at the cell surface. Identified in a complex with NCAM1, CDH2, PLCG1, FRS2, SRC, SHC1, GAP43 and CTTN. Interacts with MMP14 and HIP1. Interacts with STAT3. Post-translationally, N-glycosylated. Full maturation of the glycan chains in the Golgi is essential for high affinity interaction with FGF19. Ubiquitinated. Subject to proteasomal degradation when not fully glycosylated. In terms of processing, autophosphorylated. Binding of FGF family members together with heparan sulfate proteoglycan or heparin promotes receptor dimerization and autophosphorylation on tyrosine residues. Autophosphorylation occurs in trans between the two FGFR molecules present in the dimer.

It is found in the cell membrane. The protein resides in the endosome. The protein localises to the endoplasmic reticulum. The catalysed reaction is L-tyrosyl-[protein] + ATP = O-phospho-L-tyrosyl-[protein] + ADP + H(+). Its activity is regulated as follows. Present in an inactive conformation in the absence of bound ligand. Ligand binding leads to dimerization and activation by autophosphorylation on tyrosine residues. In terms of biological role, tyrosine-protein kinase that acts as a cell-surface receptor for fibroblast growth factors and plays a role in the regulation of cell proliferation, differentiation and migration, and in regulation of lipid metabolism, bile acid biosynthesis, glucose uptake, vitamin D metabolism and phosphate homeostasis. Required for normal down-regulation of the expression of CYP7A1, the rate-limiting enzyme in bile acid synthesis, in response to FGF19. Phosphorylates PLCG1 and FRS2. Ligand binding leads to the activation of several signaling cascades. Activation of PLCG1 leads to the production of the cellular signaling molecules diacylglycerol and inositol 1,4,5-trisphosphate. Phosphorylation of FRS2 triggers recruitment of GRB2, GAB1, PIK3R1 and SOS1, and mediates activation of RAS, MAPK1/ERK2, MAPK3/ERK1 and the MAP kinase signaling pathway, as well as of the AKT1 signaling pathway. Promotes SRC-dependent phosphorylation of the matrix protease MMP14 and its lysosomal degradation. FGFR4 signaling is down-regulated by receptor internalization and degradation; MMP14 promotes internalization and degradation of FGFR4. The sequence is that of Fibroblast growth factor receptor 4 (Fgfr4) from Rattus norvegicus (Rat).